Reading from the N-terminus, the 214-residue chain is Adenylate kinase (214 aa).

10–15 is an ATP binding site; sequence GAGKGT. The segment at 30-59 is NMP; that stretch reads STGDMLRAAIKAGTELGLNAKAVMDAGQLV. AMP is bound by residues Thr31, Arg36, 57-59, 85-88, and Gln92; these read QLV and GFPR. An LID region spans residues 122–159; the sequence is GRRVHSGSGRTYHVVFNPPKVEGKDDVTGEDLVIRADD. Residues Arg123 and 132–133 contribute to the ATP site; that span reads TY. AMP-binding residues include Arg156 and Arg167. Residue Gln200 coordinates ATP.

It belongs to the adenylate kinase family. In terms of assembly, monomer.

The protein localises to the cytoplasm. It catalyses the reaction AMP + ATP = 2 ADP. It participates in purine metabolism; AMP biosynthesis via salvage pathway; AMP from ADP: step 1/1. Catalyzes the reversible transfer of the terminal phosphate group between ATP and AMP. Plays an important role in cellular energy homeostasis and in adenine nucleotide metabolism. The protein is Adenylate kinase of Aeromonas salmonicida (strain A449).